We begin with the raw amino-acid sequence, 478 residues long: Putative indole-3-acetic acid-amido synthetase GH3.10 (478 aa).

Belongs to the IAA-amido conjugating enzyme family.

Functionally, may catalyze the synthesis of indole-3-acetic acid (IAA)-amino acid conjugates, providing a mechanism for the plant to cope with the presence of excess auxin. The chain is Putative indole-3-acetic acid-amido synthetase GH3.10 (GH3.10) from Oryza sativa subsp. japonica (Rice).